Consider the following 289-residue polypeptide: uncharacterized protein (289 aa).

The N-terminal stretch at 1–19 (MAKWLGAPLARGVSTATRA) is a signal peptide. Helical transmembrane passes span 90 to 110 (GLLAAAFVASVLLGVGIGWGV) and 257 to 277 (AALSLSLYVSSDYGGGYLVFA).

It is found in the cell membrane. This is an uncharacterized protein from Mycobacterium tuberculosis (strain CDC 1551 / Oshkosh).